Here is a 287-residue protein sequence, read N- to C-terminus: Cell division protein ZipA (287 aa).

A topological domain (periplasmic) is located at residue Met-1. A helical membrane pass occupies residues 2–22 (EIGLREWLIVIGIIVIAGILF). Residues 23 to 287 (DGWRRMRGGK…FERRALTQKR (265 aa)) lie on the Cytoplasmic side of the membrane. Residues 70–143 (LDEHDLPSMS…APRQSVNDQP (74 aa)) form a disordered region.

It belongs to the ZipA family. Interacts with FtsZ via their C-terminal domains.

It localises to the cell inner membrane. Its function is as follows. Essential cell division protein that stabilizes the FtsZ protofilaments by cross-linking them and that serves as a cytoplasmic membrane anchor for the Z ring. Also required for the recruitment to the septal ring of downstream cell division proteins. In Pseudomonas fluorescens (strain SBW25), this protein is Cell division protein ZipA.